The chain runs to 320 residues: Copper chaperone for superoxide dismutase, chloroplastic/cytosolic (320 aa).

Residues 1-67 (MASILRSVAT…LSRSFVSSPM (67 aa)) constitute a chloroplast transit peptide. An HMA domain is found at 86-149 (QLLTEFMVDM…ALEQTGRKAR (64 aa)). 4 residues coordinate Cu cation: Cys-97, Cys-100, Cys-300, and Cys-302.

In the C-terminal section; belongs to the Cu-Zn superoxide dismutase family. As to quaternary structure, interacts with CSD1. Cu(2+) is required as a cofactor. As to expression, expressed in roots, shoots, stems and flowers, and at lower levels in rosette and cauline leaves.

The protein localises to the plastid. It localises to the chloroplast. Its subcellular location is the cytoplasm. The protein resides in the cytosol. Its function is as follows. Copper chaperone for the superoxide dismutases CSD1, CSD2 and CSD3. Binds copper ions and delivers them specifically to CSDs. Is required for assistance in CSDs disulfide bond formation and thereby activation of CSDs. May be involved in the negative regulation of heat stress-responsive genes and thermotolerance. In Arabidopsis thaliana (Mouse-ear cress), this protein is Copper chaperone for superoxide dismutase, chloroplastic/cytosolic (CCS).